Consider the following 160-residue polypeptide: 3-hydroxyacyl-[acyl-carrier-protein] dehydratase FabZ (160 aa).

His58 is a catalytic residue.

The protein belongs to the thioester dehydratase family. FabZ subfamily.

The protein localises to the cytoplasm. It catalyses the reaction a (3R)-hydroxyacyl-[ACP] = a (2E)-enoyl-[ACP] + H2O. Functionally, involved in unsaturated fatty acids biosynthesis. Catalyzes the dehydration of short chain beta-hydroxyacyl-ACPs and long chain saturated and unsaturated beta-hydroxyacyl-ACPs. This chain is 3-hydroxyacyl-[acyl-carrier-protein] dehydratase FabZ, found in Ruegeria sp. (strain TM1040) (Silicibacter sp.).